A 422-amino-acid chain; its full sequence is MLFMLRWTTAGESHGQALISMIENLPAGLSVSREDVSYQLARRRLGYGRGARMKFEADEVTFVGGVRHGKTLGSPVAVMIGNTEWPKWTTIMSADPIDESDPEVAKEMASGRGAKLTRPRPGHADFSGMVKYDHDEARPILERSSARETAARVAAGTFARALLREVLGVEVLSHVISIGRSEPYEGPSPEFSDLEGIDASPVRAFDSAVEESMIDEIKAAKKSGDTLGGIVEVVVKGLPIGLGSHVSGDERLDAQLAAALMGIQAIKGVEIGDGFEEARRRGSEAHDEMEAAANGGVHRLSNRAGGLEGGMTNGEELRVRAAMKPISTVPRALKTVDMATGEAATGIHQRSDVCAVPAAGVVAETMVALVLARAVLKKFGGDSVEETKRNVQSYLEYVDTRLDWSAEANDVADGEVADGEIR.

2 residues coordinate NADP(+): R43 and R49. Residues 143 to 145, 264 to 265, G309, 324 to 328, and R350 each bind FMN; these read RSS, QA, and KPIST.

The protein belongs to the chorismate synthase family. Homotetramer. Requires FMNH2 as cofactor.

The enzyme catalyses 5-O-(1-carboxyvinyl)-3-phosphoshikimate = chorismate + phosphate. The protein operates within metabolic intermediate biosynthesis; chorismate biosynthesis; chorismate from D-erythrose 4-phosphate and phosphoenolpyruvate: step 7/7. Functionally, catalyzes the anti-1,4-elimination of the C-3 phosphate and the C-6 proR hydrogen from 5-enolpyruvylshikimate-3-phosphate (EPSP) to yield chorismate, which is the branch point compound that serves as the starting substrate for the three terminal pathways of aromatic amino acid biosynthesis. This reaction introduces a second double bond into the aromatic ring system. In Corynebacterium jeikeium (strain K411), this protein is Chorismate synthase.